The primary structure comprises 336 residues: Aspartate--ammonia ligase (336 aa).

It belongs to the class-II aminoacyl-tRNA synthetase family. AsnA subfamily.

It is found in the cytoplasm. The catalysed reaction is L-aspartate + NH4(+) + ATP = L-asparagine + AMP + diphosphate + H(+). Its pathway is amino-acid biosynthesis; L-asparagine biosynthesis; L-asparagine from L-aspartate (ammonia route): step 1/1. This is Aspartate--ammonia ligase from Clostridium perfringens (strain 13 / Type A).